Here is a 504-residue protein sequence, read N- to C-terminus: Glycerol kinase (504 aa).

T13 is a binding site for ADP. T13, T14, and S15 together coordinate ATP. T13 lines the sn-glycerol 3-phosphate pocket. R17 is an ADP binding site. The sn-glycerol 3-phosphate site is built by R83, E84, and Y135. Residues R83, E84, and Y135 each contribute to the glycerol site. Residue H231 is modified to Phosphohistidine; by HPr. D245 contacts sn-glycerol 3-phosphate. Glycerol-binding residues include D245 and Q246. Residues T267 and G310 each coordinate ADP. The ATP site is built by T267, G310, Q314, and G411. The ADP site is built by G411 and N415.

It belongs to the FGGY kinase family. In terms of assembly, homotetramer and homodimer (in equilibrium). The phosphoenolpyruvate-dependent sugar phosphotransferase system (PTS), including enzyme I, and histidine-containing protein (HPr) are required for the phosphorylation, which leads to the activation of the enzyme.

The enzyme catalyses glycerol + ATP = sn-glycerol 3-phosphate + ADP + H(+). Its pathway is polyol metabolism; glycerol degradation via glycerol kinase pathway; sn-glycerol 3-phosphate from glycerol: step 1/1. Activated by phosphorylation and inhibited by fructose 1,6-bisphosphate (FBP). Its function is as follows. Key enzyme in the regulation of glycerol uptake and metabolism. Catalyzes the phosphorylation of glycerol to yield sn-glycerol 3-phosphate. This chain is Glycerol kinase, found in Ligilactobacillus salivarius (strain UCC118) (Lactobacillus salivarius).